The sequence spans 1407 residues: Trichohyalin (1407 aa).

Residues 1–91 (MSPLLKSIID…AQAAYYALGQ (91 aa)) form an S-100-like region. EF-hand domains lie at 23–48 (CDGA…LQRP) and 49–84 (HDPE…LAQA). Residues aspartate 32, aspartate 62, aspartate 64, aspartate 66, and glutamate 73 each contribute to the Ca(2+) site. Disordered regions lie at residues 148–172 (EEEE…DKEQ), 218–237 (LREE…RALQ), 362–471 (REQA…EEEQ), 486–587 (EQLQ…ERER), 1014–1033 (REEE…EEER), 1062–1082 (KEEK…EEQQ), and 1313–1407 (EQFA…QYRP). Composition is skewed to basic and acidic residues over residues 362–381 (REQA…RQLE), 396–424 (RRQE…EQAR), 447–471 (SLRE…EEEQ), and 554–587 (QREK…ERER). The span at 1313–1376 (EQFAREEKSR…FREDQSRRQV (64 aa)) shows a compositional bias: basic and acidic residues.

Belongs to the S100-fused protein family. Homodimer. Post-translationally, substrate of transglutaminase. Some 200 arginines are probably converted to citrullines by peptidylarginine deimidase. Found in the hard keratinizing tissues such as the inner root sheath (IRS) of hair follicles and medulla, and in the filiform papillae of dorsal tongue epithelium.

Its function is as follows. Intermediate filament-associated protein that associates in regular arrays with keratin intermediate filaments (KIF) of the inner root sheath cells of the hair follicle and the granular layer of the epidermis. It later becomes cross-linked to KIF by isodipeptide bonds. It may serve as scaffold protein, together with involucrin, in the organization of the cell envelope or even anchor the cell envelope to the KIF network. It may be involved in its own calcium-dependent postsynthetic processing during terminal differentiation. This chain is Trichohyalin (TCHH), found in Oryctolagus cuniculus (Rabbit).